Here is a 285-residue protein sequence, read N- to C-terminus: HTH-type transcriptional regulator MurR (285 aa).

One can recognise an HTH rpiR-type domain in the interval 1 to 77 (MLYLTKIRNA…MALIGEYSAS (77 aa)). A DNA-binding region (H-T-H motif) is located at residues 37–56 (SRKMAKQLGISQSSIVKFAQ). The SIS domain maps to 128-268 (IIEVISKAPF…FVGLVQLNDV (141 aa)).

As to quaternary structure, homotetramer.

It functions in the pathway amino-sugar metabolism; N-acetylmuramate degradation [regulation]. Represses the expression of the murPQ operon involved in the uptake and degradation of N-acetylmuramic acid (MurNAc). Binds to two adjacent inverted repeats within the operator region. MurNAc 6-phosphate, the substrate of MurQ, is the specific inducer that weakens binding of MurR to the operator. The sequence is that of HTH-type transcriptional regulator MurR from Escherichia coli O7:K1 (strain IAI39 / ExPEC).